Here is a 347-residue protein sequence, read N- to C-terminus: Probable G-protein coupled receptor 148 (347 aa).

Topologically, residues 1–51 (MGDELAPCPVGTTAWPALIQLISKTPCMPQAASNTSLGLGDLRVPSSMLYW) are extracellular. The N-linked (GlcNAc...) asparagine glycan is linked to Asn-34. The chain crosses the membrane as a helical span at residues 52-72 (LFLPSSLLAAATLAVSPLLLV). The Cytoplasmic segment spans residues 73–85 (TILRNQRLRQEPH). Residues 86-106 (YLLPANILLSDLAYILLHMLI) traverse the membrane as a helical segment. Residues 107–130 (SSSSLGGWELGRMACGILTDAVFA) are Extracellular-facing. The helical transmembrane segment at 131 to 151 (ACTSTILSFTAIVLHTYLAVI) threads the bilayer. Residues 152–165 (HPLRYLSFMSHGAA) lie on the Cytoplasmic side of the membrane. Residues 166-186 (WKAVALIWLVACCFPTFLIWL) form a helical membrane-spanning segment. The Extracellular segment spans residues 187 to 214 (SKWQDAQLEEQGASYILPPSMGTQPGCG). Residues 215–235 (LLVIVTYTSILCVLFLCTALI) traverse the membrane as a helical segment. Over 236–261 (ANCFWRIYAEAKTSGIWGQGYSRARG) the chain is Cytoplasmic. A helical transmembrane segment spans residues 262–282 (TLLIHSVLITLYVSTGVVFSL). At 283–299 (DMVLTRYHHIDSGTHTW) the chain is on the extracellular side. The chain crosses the membrane as a helical span at residues 300–322 (LLAANSEVLMMLPRAMLTYLYLL). The Cytoplasmic portion of the chain corresponds to 323 to 347 (RYRQLLGMVRGHLPSRRHQAIFTIS).

The protein belongs to the G-protein coupled receptor 1 family. In terms of tissue distribution, expression restricted to nervous system and testis. Is also detected in several tumors types, most notably prostate cancer.

The protein localises to the cell membrane. Functionally, orphan receptor. This is Probable G-protein coupled receptor 148 (GPR148) from Homo sapiens (Human).